The primary structure comprises 137 residues: Large ribosomal subunit protein uL16 (137 aa).

Basic residues predominate over residues 1–17; the sequence is MLQPKRTKFRKTHKGRN. A disordered region spans residues 1 to 23; the sequence is MLQPKRTKFRKTHKGRNRGLAQN.

This sequence belongs to the universal ribosomal protein uL16 family. In terms of assembly, part of the 50S ribosomal subunit.

Functionally, binds 23S rRNA and is also seen to make contacts with the A and possibly P site tRNAs. The polypeptide is Large ribosomal subunit protein uL16 (Pseudoalteromonas translucida (strain TAC 125)).